A 344-amino-acid chain; its full sequence is Mitochondrial mRNA pseudouridine synthase RPUSD3 (344 aa).

The transit peptide at 1 to 41 (MGGWRVLGQASGGWRRGLGIRATSTAAGFGTKARHQLQRRG) directs the protein to the mitochondrion. The segment at 29 to 59 (FGTKARHQLQRRGASKPSDPPGDQPFPGLLR) is disordered. Residues 32-42 (KARHQLQRRGA) show a composition bias toward basic residues. A Phosphoserine modification is found at Ser64.

It belongs to the pseudouridine synthase RluA family. As to quaternary structure, forms a regulatory protein-RNA complex, consisting of RCC1L, NGRN, RPUSD3, RPUSD4, TRUB2, FASTKD2 and 16S mt-rRNA.

It is found in the mitochondrion matrix. The enzyme catalyses a uridine in mRNA = a pseudouridine in mRNA. Its function is as follows. Catalyzes uridine to pseudouridine isomerization (pseudouridylation) of specific mitochondrial mRNAs (mt-mRNAs), a post-transcriptional modification necessary for their translation. Acts at position 390 in COXI mt-mRNA and at position 697-699 in mitochondrial COXIII mt-mRNA. As a component of a functional protein-RNA module, consisting of RCC1L, NGRN, RPUSD3, RPUSD4, TRUB2, FASTKD2 and 16S mitochondrial ribosomal RNA (16S mt-rRNA), controls 16S mt-rRNA abundance and may play a role in mitochondrial ribosome biogenesis. The chain is Mitochondrial mRNA pseudouridine synthase RPUSD3 (RPUSD3) from Bos taurus (Bovine).